A 1508-amino-acid polypeptide reads, in one-letter code: Ras guanine nucleotide exchange factor Y (1508 aa).

Disordered stretches follow at residues 1–73 (MIII…NNNE), 128–182 (KVLS…PKSV), 197–272 (IDNN…YSTS), 396–517 (ILQC…EDED), 565–593 (LSEN…SIPT), 606–727 (LPNI…AEPS), 831–1021 (NVII…SNKE), and 1153–1172 (TNED…TNKN). 2 stretches are compositionally biased toward low complexity: residues 9 to 22 (NINN…NNNS) and 33 to 72 (NNNN…NNNN). Polar residues-rich tracts occupy residues 128–150 (KVLS…TNTI) and 172–182 (DRTSQDIPKSV). A compositionally biased stretch (low complexity) spans 199–216 (NNTTNNNSNNNNNSSLST). Over residues 223 to 232 (DSLETNPIKD) the composition is skewed to basic and acidic residues. Acidic residues predominate over residues 233–250 (EESEESEESEESKEEEEE). Low complexity predominate over residues 255–272 (IKTTKTTSETIESSYSTS). Over residues 399 to 409 (CKDDSSSKDQD) the composition is skewed to basic and acidic residues. A compositionally biased stretch (low complexity) spans 413 to 447 (NNSAGSSGNSSASNSNRNSIAFSSSNHFSSESSQS). Over residues 465–475 (PQSPSPSPSPP) the composition is skewed to pro residues. Over residues 492-510 (FNQQTNFSVSPTKSPSNEK) the composition is skewed to polar residues. Low complexity-rich tracts occupy residues 574 to 593 (NQPS…SIPT), 606 to 660 (LPNI…LTES), 668 to 687 (NNNN…NNNN), 831 to 855 (NVII…NTVK), 862 to 891 (NKSS…SLTP), 942 to 984 (SLWS…SPPT), 993 to 1019 (ITTG…NNSN), and 1160 to 1172 (SNSN…TNKN). A coiled-coil region spans residues 659 to 686 (ESLKTRIEENNNNNNNKNINNNNNNNNN). Residues 1074-1234 (NRIKVRSASL…IILKIIDRKA (161 aa)) enclose the N-terminal Ras-GEF domain. The Ras-GEF domain maps to 1278–1508 (DDLEIARQLT…LYKQSKIIEP (231 aa)).

In terms of biological role, promotes the exchange of Ras-bound GDP by GTP. The sequence is that of Ras guanine nucleotide exchange factor Y (gefY) from Dictyostelium discoideum (Social amoeba).